A 130-amino-acid polypeptide reads, in one-letter code: DNA-directed RNA polymerase subunit omega (130 aa).

The tract at residues 80–130 (PEPDTVPLIGSAGASVDADDTEVAPERMTEEELLKGLEGLAPPEEQPEEDE) is disordered. The segment covering 103–114 (APERMTEEELLK) has biased composition (basic and acidic residues).

The protein belongs to the RNA polymerase subunit omega family. In terms of assembly, the RNAP catalytic core consists of 2 alpha, 1 beta, 1 beta' and 1 omega subunit. When a sigma factor is associated with the core the holoenzyme is formed, which can initiate transcription.

The enzyme catalyses RNA(n) + a ribonucleoside 5'-triphosphate = RNA(n+1) + diphosphate. Promotes RNA polymerase assembly. Latches the N- and C-terminal regions of the beta' subunit thereby facilitating its interaction with the beta and alpha subunits. This Rhodopseudomonas palustris (strain BisB18) protein is DNA-directed RNA polymerase subunit omega.